A 251-amino-acid chain; its full sequence is Flap endonuclease Xni (251 aa).

Residue Asp-104 coordinates Mg(2+). In terms of domain architecture, 5'-3' exonuclease spans 160 to 249 (VQPQQLPDYW…IDGNLQQLRL (90 aa)). 5 residues coordinate K(+): Leu-171, Ala-172, Pro-180, Val-182, and Ile-185. The segment at 184-189 (GIGPKS) is interaction with DNA.

It belongs to the Xni family. Requires Mg(2+) as cofactor. K(+) is required as a cofactor.

Functionally, has flap endonuclease activity. During DNA replication, flap endonucleases cleave the 5'-overhanging flap structure that is generated by displacement synthesis when DNA polymerase encounters the 5'-end of a downstream Okazaki fragment. The sequence is that of Flap endonuclease Xni from Escherichia coli O6:K15:H31 (strain 536 / UPEC).